The chain runs to 479 residues: Aspartyl/glutamyl-tRNA(Asn/Gln) amidotransferase subunit B (479 aa).

Belongs to the GatB/GatE family. GatB subfamily. Heterotrimer of A, B and C subunits.

It carries out the reaction L-glutamyl-tRNA(Gln) + L-glutamine + ATP + H2O = L-glutaminyl-tRNA(Gln) + L-glutamate + ADP + phosphate + H(+). It catalyses the reaction L-aspartyl-tRNA(Asn) + L-glutamine + ATP + H2O = L-asparaginyl-tRNA(Asn) + L-glutamate + ADP + phosphate + 2 H(+). Allows the formation of correctly charged Asn-tRNA(Asn) or Gln-tRNA(Gln) through the transamidation of misacylated Asp-tRNA(Asn) or Glu-tRNA(Gln) in organisms which lack either or both of asparaginyl-tRNA or glutaminyl-tRNA synthetases. The reaction takes place in the presence of glutamine and ATP through an activated phospho-Asp-tRNA(Asn) or phospho-Glu-tRNA(Gln). This Geotalea uraniireducens (strain Rf4) (Geobacter uraniireducens) protein is Aspartyl/glutamyl-tRNA(Asn/Gln) amidotransferase subunit B.